The following is a 234-amino-acid chain: Triosephosphate isomerase (234 aa).

8-10 contributes to the substrate binding site; sequence NFK. The Electrophile role is filled by His-90. Glu-159 serves as the catalytic Proton acceptor. Residues Gly-165 and Ser-197 each contribute to the substrate site.

This sequence belongs to the triosephosphate isomerase family. As to quaternary structure, homodimer.

It localises to the cytoplasm. It catalyses the reaction D-glyceraldehyde 3-phosphate = dihydroxyacetone phosphate. It functions in the pathway carbohydrate biosynthesis; gluconeogenesis. The protein operates within carbohydrate degradation; glycolysis; D-glyceraldehyde 3-phosphate from glycerone phosphate: step 1/1. Functionally, involved in the gluconeogenesis. Catalyzes stereospecifically the conversion of dihydroxyacetone phosphate (DHAP) to D-glyceraldehyde-3-phosphate (G3P). The sequence is that of Triosephosphate isomerase from Helicobacter pylori (strain G27).